Reading from the N-terminus, the 389-residue chain is Chalcone synthase 8 (389 aa).

Residue cysteine 164 is part of the active site.

It belongs to the thiolase-like superfamily. Chalcone/stilbene synthases family.

It carries out the reaction (E)-4-coumaroyl-CoA + 3 malonyl-CoA + 3 H(+) = 2',4,4',6'-tetrahydroxychalcone + 3 CO2 + 4 CoA. Its pathway is secondary metabolite biosynthesis; flavonoid biosynthesis. Its function is as follows. The primary product of this enzyme is 4,2',4',6'-tetrahydroxychalcone (also termed naringenin-chalcone or chalcone) which can under specific conditions spontaneously isomerize into naringenin. This Medicago sativa (Alfalfa) protein is Chalcone synthase 8 (CHS8).